The following is a 189-amino-acid chain: Small ribosomal subunit protein uS7 (189 aa).

This sequence belongs to the universal ribosomal protein uS7 family. Component of the small ribosomal subunit.

The protein resides in the cytoplasm. The protein is Small ribosomal subunit protein uS7 (RPS5) of Encephalitozoon cuniculi (strain GB-M1) (Microsporidian parasite).